The primary structure comprises 497 residues: Lysine--tRNA ligase (497 aa).

Residues Glu-406 and Glu-413 each contribute to the Mg(2+) site.

The protein belongs to the class-II aminoacyl-tRNA synthetase family. In terms of assembly, homodimer. Mg(2+) serves as cofactor.

It localises to the cytoplasm. It carries out the reaction tRNA(Lys) + L-lysine + ATP = L-lysyl-tRNA(Lys) + AMP + diphosphate. This is Lysine--tRNA ligase from Rhizobium leguminosarum bv. trifolii (strain WSM2304).